A 1045-amino-acid polypeptide reads, in one-letter code: FERM, ARHGEF and pleckstrin domain-containing protein 1 (1045 aa).

A disordered region spans residues 1-37; the sequence is MGEIEQRPTPGSRLGAPENSGISTLERGQKPPPTPSG. Residues Ser20 and Ser23 each carry the phosphoserine modification. Thr24 is modified (phosphothreonine). An FERM domain is found at 40–320; sequence VSIKIQMLDD…EHHAFFRLFE (281 aa). Residues Ser340, Ser373, Ser389, Ser403, Ser418, Ser427, and Ser433 each carry the phosphoserine modification. Residues 392–534 form a disordered region; that stretch reads SASLTFGEGA…TDDEDEGRRK (143 aa). Composition is skewed to polar residues over residues 471–489 and 496–511; these read TGSLTGSPHLSELSVNSQG and VTLSPNLSPDTKQASP. Residues Ser510 and Ser514 each carry the phosphoserine modification. Positions 540 to 730 constitute a DH domain; it reads KAYFIAKEVS…TEMVAQLHGT (191 aa). One can recognise a PH 1 domain in the interval 759 to 856; the sequence is EFIRLGSLSK…WVEDIQMAID (98 aa). A phosphoserine mark is found at Ser833, Ser872, and Ser878. The segment at 866–902 is disordered; the sequence is PEFLASSPPDNKSPDEATAADQESEDDLSASRTSLER. Position 883 is a phosphothreonine (Thr883). Ser889, Ser896, and Ser899 each carry phosphoserine. The PH 2 domain occupies 932-1029; it reads ENQLSGNLLR…WMEVIRSATS (98 aa).

In terms of assembly, interacts with CADM1. Interacts with RAC1.

The protein resides in the cell membrane. It is found in the synapse. It localises to the synaptosome. Its subcellular location is the cytoplasm. The protein localises to the cytosol. The protein resides in the cell projection. It is found in the filopodium. It localises to the dendrite. Its subcellular location is the dendritic spine. Functionally, functions as a guanine nucleotide exchange factor for RAC1. May play a role in semaphorin signaling. Plays a role in the assembly and disassembly of dendritic filopodia, the formation of dendritic spines, regulation of dendrite length and ultimately the formation of synapses. This Pongo abelii (Sumatran orangutan) protein is FERM, ARHGEF and pleckstrin domain-containing protein 1 (FARP1).